Reading from the N-terminus, the 1404-residue chain is DNA-directed RNA polymerase subunit beta' (1404 aa).

4 residues coordinate Zn(2+): C60, C62, C75, and C78. Positions 449, 451, and 453 each coordinate Mg(2+). Residues C778, C852, C859, and C862 each coordinate Zn(2+). Positions 1380-1404 (LDRPLEEEEEEEIPQAIAEESDAEE) are disordered. Residues 1384–1404 (LEEEEEEEIPQAIAEESDAEE) are compositionally biased toward acidic residues.

It belongs to the RNA polymerase beta' chain family. The RNAP catalytic core consists of 2 alpha, 1 beta, 1 beta' and 1 omega subunit. When a sigma factor is associated with the core the holoenzyme is formed, which can initiate transcription. Requires Mg(2+) as cofactor. The cofactor is Zn(2+).

The catalysed reaction is RNA(n) + a ribonucleoside 5'-triphosphate = RNA(n+1) + diphosphate. DNA-dependent RNA polymerase catalyzes the transcription of DNA into RNA using the four ribonucleoside triphosphates as substrates. The sequence is that of DNA-directed RNA polymerase subunit beta' from Leptospira interrogans serogroup Icterohaemorrhagiae serovar Lai (strain 56601).